The chain runs to 309 residues: Prephenate dehydratase (309 aa).

The 189-residue stretch at 3–191 folds into the Prephenate dehydratase domain; it reads GIAYLGPEGT…ARTRFVLVGC (189 aa). One can recognise an ACT domain in the interval 205–282; it reads SVVLRLDNVP…ADVRYLGSWP (78 aa).

As to quaternary structure, homodimer.

It catalyses the reaction prephenate + H(+) = 3-phenylpyruvate + CO2 + H2O. It functions in the pathway amino-acid biosynthesis; L-phenylalanine biosynthesis; phenylpyruvate from prephenate: step 1/1. The polypeptide is Prephenate dehydratase (pheA) (Mycolicibacterium gilvum (strain PYR-GCK) (Mycobacterium gilvum (strain PYR-GCK))).